A 483-amino-acid polypeptide reads, in one-letter code: Triacylglycerol lipase ptl3 (483 aa).

A PNPLA domain is found at 141 to 340 (LILSGGGTFG…DNDIPHAKLT (200 aa)). The GXGXXG motif lies at 145–150 (GGGTFG). The GXSXG motif lies at 172 to 176 (GSSAG). Ser174 functions as the Nucleophile in the catalytic mechanism. Asp327 serves as the catalytic Proton acceptor.

It is found in the cytoplasm. The protein localises to the lipid droplet. The catalysed reaction is a triacylglycerol + H2O = a diacylglycerol + a fatty acid + H(+). Its function is as follows. Lipid particle-localized triacylglycerol (TAG) lipase. The lipid droplet/particle is a lipid storage compartment which serves as a depot of energy and building blocks for membrane lipid biosynthesis. Involved in the mobilization of the non-polar storage lipids triacylglycerols (TAGs) from lipid particles by hydrolysis of TAGs, releasing and supplying specific fatty acids to the appropriate metabolic pathways. This Schizosaccharomyces pombe (strain 972 / ATCC 24843) (Fission yeast) protein is Triacylglycerol lipase ptl3 (ptl3).